Here is a 166-residue protein sequence, read N- to C-terminus: Regulator of ribonuclease activity A (166 aa).

The protein belongs to the RraA family. Homotrimer. Binds to both RNA-binding sites in the C-terminal region of Rne and to RhlB.

It is found in the cytoplasm. Globally modulates RNA abundance by binding to RNase E (Rne) and regulating its endonucleolytic activity. Can modulate Rne action in a substrate-dependent manner by altering the composition of the degradosome. Modulates RNA-binding and helicase activities of the degradosome. This is Regulator of ribonuclease activity A from Histophilus somni (strain 129Pt) (Haemophilus somnus).